The chain runs to 126 residues: Histone H2B.5 (126 aa).

Over residues 1 to 27 the composition is skewed to basic and acidic residues; the sequence is MAPKAEKKPSEKAPKADKKITKEGGSE. Residues 1-34 form a disordered region; the sequence is MAPKAEKKPSEKAPKADKKITKEGGSERKKKTKK. Position 2 is a n,N,N-trimethylalanine; alternate (Ala2). Ala2 bears the N,N-dimethylalanine; alternate mark. Ala2 is modified (N-methylalanine; alternate). Lys4 bears the N6-methyllysine mark. Residues Lys7, Lys12, Lys18, and Lys19 each carry the N6-acetyllysine modification. Lys122 participates in a covalent cross-link: Glycyl lysine isopeptide (Lys-Gly) (interchain with G-Cter in ubiquitin).

It belongs to the histone H2B family. As to quaternary structure, the nucleosome is a histone octamer containing two molecules each of H2A, H2B, H3 and H4 assembled in one H3-H4 heterotetramer and two H2A-H2B heterodimers. The octamer wraps approximately 147 bp of DNA. In terms of processing, can be acetylated to form H2BK6ac, H2BK33ac and H2BK34ac. Monoubiquitinated by BRE1 to form H2BK143ub1 and deubiquitinated by UBP26. Required for heterochromatic histone H3 di- and trimethylation at H3K4me. May give a specific tag for epigenetic transcriptional activation.

The protein resides in the nucleus. It localises to the chromosome. Its function is as follows. Core component of nucleosome. Nucleosomes wrap and compact DNA into chromatin, limiting DNA accessibility to the cellular machineries which require DNA as a template. Histones thereby play a central role in transcription regulation, DNA repair, DNA replication and chromosomal stability. DNA accessibility is regulated via a complex set of post-translational modifications of histones, also called histone code, and nucleosome remodeling. The protein is Histone H2B.5 of Arabidopsis thaliana (Mouse-ear cress).